The following is a 322-amino-acid chain: Lipoyl synthase (322 aa).

Residues Cys66, Cys71, Cys77, Cys92, Cys96, Cys99, and Ser306 each contribute to the [4Fe-4S] cluster site. The Radical SAM core domain occupies 78–295 (FSKGTATFMI…EKEAYELGFS (218 aa)).

The protein belongs to the radical SAM superfamily. Lipoyl synthase family. The cofactor is [4Fe-4S] cluster.

Its subcellular location is the cytoplasm. The enzyme catalyses [[Fe-S] cluster scaffold protein carrying a second [4Fe-4S](2+) cluster] + N(6)-octanoyl-L-lysyl-[protein] + 2 oxidized [2Fe-2S]-[ferredoxin] + 2 S-adenosyl-L-methionine + 4 H(+) = [[Fe-S] cluster scaffold protein] + N(6)-[(R)-dihydrolipoyl]-L-lysyl-[protein] + 4 Fe(3+) + 2 hydrogen sulfide + 2 5'-deoxyadenosine + 2 L-methionine + 2 reduced [2Fe-2S]-[ferredoxin]. It participates in protein modification; protein lipoylation via endogenous pathway; protein N(6)-(lipoyl)lysine from octanoyl-[acyl-carrier-protein]: step 2/2. Catalyzes the radical-mediated insertion of two sulfur atoms into the C-6 and C-8 positions of the octanoyl moiety bound to the lipoyl domains of lipoate-dependent enzymes, thereby converting the octanoylated domains into lipoylated derivatives. This is Lipoyl synthase from Neisseria meningitidis serogroup C (strain 053442).